Reading from the N-terminus, the 21-residue chain is Snake venom serine protease jerdonase (21 aa).

One can recognise a Peptidase S1 domain in the interval 1-21; sequence IIGGDECNINEHPFLVALYDA.

The protein belongs to the peptidase S1 family. Snake venom subfamily. In terms of assembly, monomer. In terms of processing, glycosylated; contains 35.8% neutral carbohydrate. As to expression, expressed by the venom gland.

Its subcellular location is the secreted. Its activity is regulated as follows. Inhibited by PMSF and soybean trypsin inhibitor. Partially inhibited by L-cysteine and DTT. Not affected by EDTA. Its function is as follows. Multifunctional venom serine protease that has fibrino(geno)lytic activity towards the A alpha-chain of human fibrinogen (FGA) and a slow activity towards the B beta-chain (FGB). Also hydrolyzes bovine low-molecular-mass kininogen and releases bradykinin. Catalyzes the hydrolysis of BAEE, S-2238 and S-2302. The sequence is that of Snake venom serine protease jerdonase from Protobothrops jerdonii (Jerdon's pitviper).